The following is a 32-amino-acid chain: Corticostatin-related peptide RK-1 (32 aa).

3 disulfides stabilise this stretch: Cys3–Cys29, Cys5–Cys19, and Cys9–Cys28.

It is found in the secreted. Functionally, has antimicrobial activity against E.coli and activates ion channel activity. The protein is Corticostatin-related peptide RK-1 of Oryctolagus cuniculus (Rabbit).